Here is a 78-residue protein sequence, read N- to C-terminus: Acyl carrier protein (78 aa).

One can recognise a Carrier domain in the interval 2 to 77 (SNIEQQVKKI…LAIDYINAHN (76 aa)). O-(pantetheine 4'-phosphoryl)serine is present on serine 37.

This sequence belongs to the acyl carrier protein (ACP) family. 4'-phosphopantetheine is transferred from CoA to a specific serine of apo-ACP by AcpS. This modification is essential for activity because fatty acids are bound in thioester linkage to the sulfhydryl of the prosthetic group.

It is found in the cytoplasm. The protein operates within lipid metabolism; fatty acid biosynthesis. Its function is as follows. Carrier of the growing fatty acid chain in fatty acid biosynthesis. The protein is Acyl carrier protein of Neisseria gonorrhoeae (strain ATCC 700825 / FA 1090).